We begin with the raw amino-acid sequence, 476 residues long: Doublecortin domain-containing protein 2 (476 aa).

2 consecutive Doublecortin domains span residues 17 to 100 and 139 to 221; these read KSVL…LNYL and CTIF…LPYS. Positions 234–476 are disordered; sequence FGQKASSLPP…QQNKDYAAVA (243 aa). Positions 261–272 are enriched in polar residues; it reads STVGSSDNSSPQ. Position 270 is a phosphoserine (Ser270). Over residues 279-289 the composition is skewed to basic and acidic residues; that stretch reads KKEDVNSEKLT. The segment covering 296–306 has biased composition (polar residues); it reads KLKNSQETIPN. Residues 354-366 show a composition bias toward basic and acidic residues; that stretch reads EKANKDAEQKEDF. The span at 415–426 shows a compositional bias: low complexity; sequence ELQQVNNELQLV. Over residues 446–455 the composition is skewed to basic and acidic residues; that stretch reads DPQRPPRPEV.

As to quaternary structure, interacts with DVL1, DVL2 and DVL3. Ubiquitously expressed. In brain, highly expressed in the entorhinal cortex, inferior temporal cortex, medial temporal cortex, hypothalamus, amygdala and hippocampus. Expressed in liver by cholangiocytes, the epithelial cells of the bile ducts (at protein level).

It is found in the cell projection. It localises to the cilium. The protein resides in the cytoplasm. The protein localises to the cytoskeleton. Its subcellular location is the cilium axoneme. It is found in the kinocilium. Functionally, protein that plays a role in the inhibition of canonical Wnt signaling pathway. May be involved in neuronal migration during development of the cerebral neocortex. Involved in the control of ciliogenesis and ciliary length. This chain is Doublecortin domain-containing protein 2 (DCDC2), found in Homo sapiens (Human).